The chain runs to 382 residues: Chaperone protein DnaJ (382 aa).

Positions 5–70 (DYYDLLGLSK…DKRAAYDRYG (66 aa)) constitute a J domain. The CR-type zinc-finger motif lies at 138-216 (GTKVPINYVT…CSGSGRVRDE (79 aa)). Residues C151, C154, C168, C171, C190, C193, C204, and C207 each coordinate Zn(2+). CXXCXGXG motif repeat units lie at residues 151–158 (CSSCSGSG), 168–175 (CNTCHGAG), 190–197 (CHVCNGEG), and 204–211 (CKKCSGSG).

Belongs to the DnaJ family. As to quaternary structure, homodimer. Requires Zn(2+) as cofactor.

The protein localises to the cytoplasm. Functionally, participates actively in the response to hyperosmotic and heat shock by preventing the aggregation of stress-denatured proteins and by disaggregating proteins, also in an autonomous, DnaK-independent fashion. Unfolded proteins bind initially to DnaJ; upon interaction with the DnaJ-bound protein, DnaK hydrolyzes its bound ATP, resulting in the formation of a stable complex. GrpE releases ADP from DnaK; ATP binding to DnaK triggers the release of the substrate protein, thus completing the reaction cycle. Several rounds of ATP-dependent interactions between DnaJ, DnaK and GrpE are required for fully efficient folding. Also involved, together with DnaK and GrpE, in the DNA replication of plasmids through activation of initiation proteins. The polypeptide is Chaperone protein DnaJ (Ehrlichia ruminantium (strain Gardel)).